Here is a 131-residue protein sequence, read N- to C-terminus: Arsenate reductase (131 aa).

Residues C10, C82, and C89 each act as nucleophile in the active site. 2 disulfides stabilise this stretch: C10/C82 and C82/C89.

This sequence belongs to the low molecular weight phosphotyrosine protein phosphatase family. Thioredoxin-coupled ArsC subfamily.

It localises to the cytoplasm. It carries out the reaction arsenate + [thioredoxin]-dithiol + H(+) = arsenite + [thioredoxin]-disulfide + H2O. Its function is as follows. Catalyzes the reduction of arsenate [As(V)] to arsenite [As(III)]. This Staphylococcus aureus (strain N315) protein is Arsenate reductase.